A 401-amino-acid polypeptide reads, in one-letter code: Restriction of telomere capping protein 4 (401 aa).

At Ser-23 the chain carries Phosphoserine. Basic and acidic residues predominate over residues 35-48 (KHDIHDRESDDLSG). Residues 35–59 (KHDIHDRESDDLSGHDAFSPSKKRG) form a disordered region.

It belongs to the RTC4 family.

It is found in the cytoplasm. Its subcellular location is the nucleus. May be involved in a process influencing telomere capping. The protein is Restriction of telomere capping protein 4 (RTC4) of Saccharomyces cerevisiae (strain ATCC 204508 / S288c) (Baker's yeast).